A 75-amino-acid chain; its full sequence is UPF0352 protein ASA_2693 (75 aa).

The protein belongs to the UPF0352 family.

The protein is UPF0352 protein ASA_2693 of Aeromonas salmonicida (strain A449).